Reading from the N-terminus, the 586-residue chain is Asparagine synthetase, nodule [glutamine-hydrolyzing] (586 aa).

C2 functions as the For GATase activity in the catalytic mechanism. In terms of domain architecture, Glutamine amidotransferase type-2 spans 2 to 185 (CGILAVLGCS…PGHLYSSKER (184 aa)). L-glutamine-binding positions include 50–54 (RLAIV), 75–77 (NGE), and D98. An Asparagine synthetase domain is found at 193-517 (PPWFNEAIIP…PQNSARLTVP (325 aa)). Residues L232, V268, and 342–343 (SG) contribute to the ATP site.

In terms of tissue distribution, root nodules.

The enzyme catalyses L-aspartate + L-glutamine + ATP + H2O = L-asparagine + L-glutamate + AMP + diphosphate + H(+). The protein operates within amino-acid biosynthesis; L-asparagine biosynthesis; L-asparagine from L-aspartate (L-Gln route): step 1/1. The polypeptide is Asparagine synthetase, nodule [glutamine-hydrolyzing] (AS1) (Pisum sativum (Garden pea)).